A 708-amino-acid polypeptide reads, in one-letter code: Polyribonucleotide nucleotidyltransferase (708 aa).

2 residues coordinate Mg(2+): Asp488 and Asp494. Positions 555–615 (PIIKVTKVDP…ENVDKAIELI (61 aa)) constitute a KH domain. The 68-residue stretch at 625 to 692 (GEVLEGKVTR…DLGRLQFKRV (68 aa)) folds into the S1 motif domain.

The protein belongs to the polyribonucleotide nucleotidyltransferase family. The cofactor is Mg(2+).

It is found in the cytoplasm. It catalyses the reaction RNA(n+1) + phosphate = RNA(n) + a ribonucleoside 5'-diphosphate. Involved in mRNA degradation. Catalyzes the phosphorolysis of single-stranded polyribonucleotides processively in the 3'- to 5'-direction. This Thermotoga petrophila (strain ATCC BAA-488 / DSM 13995 / JCM 10881 / RKU-1) protein is Polyribonucleotide nucleotidyltransferase.